The sequence spans 412 residues: Multifunctional CCA protein (412 aa).

2 residues coordinate ATP: Gly8 and Arg11. CTP contacts are provided by Gly8 and Arg11. Mg(2+) contacts are provided by Asp21 and Asp23. ATP contacts are provided by Arg91, Arg137, and Arg140. Arg91, Arg137, and Arg140 together coordinate CTP. Residues 228 to 329 (TGIHTLMTLS…VKLFDSIDAW (102 aa)) form the HD domain.

The protein belongs to the tRNA nucleotidyltransferase/poly(A) polymerase family. Bacterial CCA-adding enzyme type 1 subfamily. In terms of assembly, monomer. Can also form homodimers and oligomers. Requires Mg(2+) as cofactor. It depends on Ni(2+) as a cofactor.

The enzyme catalyses a tRNA precursor + 2 CTP + ATP = a tRNA with a 3' CCA end + 3 diphosphate. It carries out the reaction a tRNA with a 3' CCA end + 2 CTP + ATP = a tRNA with a 3' CCACCA end + 3 diphosphate. Functionally, catalyzes the addition and repair of the essential 3'-terminal CCA sequence in tRNAs without using a nucleic acid template. Adds these three nucleotides in the order of C, C, and A to the tRNA nucleotide-73, using CTP and ATP as substrates and producing inorganic pyrophosphate. tRNA 3'-terminal CCA addition is required both for tRNA processing and repair. Also involved in tRNA surveillance by mediating tandem CCA addition to generate a CCACCA at the 3' terminus of unstable tRNAs. While stable tRNAs receive only 3'-terminal CCA, unstable tRNAs are marked with CCACCA and rapidly degraded. This is Multifunctional CCA protein from Escherichia coli O1:K1 / APEC.